We begin with the raw amino-acid sequence, 159 residues long: MKIMIIQGPNVNMLGVREVGIYGAMKMEEIHEQMKLAASQNNVELDFFQSNFEGEIVDKIQECLGTVDGIIINAAGYTHTSVAIRDAIAAVALPTIEVHISNVYRREEFRQKNLIAPVCSGTIVGFGPFGYHLALMGIIQICEQIKNLRAMQQAQQTNK.

The active-site Proton acceptor is the tyrosine 22. The substrate site is built by asparagine 73, histidine 79, and aspartate 86. Histidine 99 functions as the Proton donor in the catalytic mechanism. Substrate-binding positions include isoleucine 100–serine 101 and arginine 110.

It belongs to the type-II 3-dehydroquinase family. As to quaternary structure, homododecamer.

It catalyses the reaction 3-dehydroquinate = 3-dehydroshikimate + H2O. Its pathway is metabolic intermediate biosynthesis; chorismate biosynthesis; chorismate from D-erythrose 4-phosphate and phosphoenolpyruvate: step 3/7. Its function is as follows. Catalyzes a trans-dehydration via an enolate intermediate. The polypeptide is 3-dehydroquinate dehydratase (Campylobacter jejuni subsp. doylei (strain ATCC BAA-1458 / RM4099 / 269.97)).